A 175-amino-acid chain; its full sequence is Translation initiation factor IF-3 (175 aa).

This sequence belongs to the IF-3 family. As to quaternary structure, monomer.

Its subcellular location is the cytoplasm. In terms of biological role, IF-3 binds to the 30S ribosomal subunit and shifts the equilibrium between 70S ribosomes and their 50S and 30S subunits in favor of the free subunits, thus enhancing the availability of 30S subunits on which protein synthesis initiation begins. This chain is Translation initiation factor IF-3, found in Staphylococcus aureus (strain MRSA252).